The chain runs to 874 residues: Alanine--tRNA ligase (874 aa).

Zn(2+) is bound by residues histidine 564, histidine 568, cysteine 665, and histidine 669.

It belongs to the class-II aminoacyl-tRNA synthetase family. The cofactor is Zn(2+).

The protein resides in the cytoplasm. The enzyme catalyses tRNA(Ala) + L-alanine + ATP = L-alanyl-tRNA(Ala) + AMP + diphosphate. In terms of biological role, catalyzes the attachment of alanine to tRNA(Ala) in a two-step reaction: alanine is first activated by ATP to form Ala-AMP and then transferred to the acceptor end of tRNA(Ala). Also edits incorrectly charged Ser-tRNA(Ala) and Gly-tRNA(Ala) via its editing domain. This Burkholderia thailandensis (strain ATCC 700388 / DSM 13276 / CCUG 48851 / CIP 106301 / E264) protein is Alanine--tRNA ligase.